The following is a 143-amino-acid chain: Late embryogenesis abundant protein 1 (143 aa).

Low complexity predominate over residues 1-17 (MSSQQNQNRQGEQQEQG). The segment at 1-143 (MSSQQNQNRQ…QAGEKVKGRD (143 aa)) is disordered. A run of 4 repeats spans residues 47–57 (KTAEFRDSAGE), 69–79 (KGQEFKERAGE), 80–90 (KAEETKQRAGE), and 91–101 (KMDETKQRAGE). Basic and acidic residues-rich tracts occupy residues 47–60 (KTAEFRDSAGETIR) and 69–143 (KGQE…KGRD). The 4 X 11 AA approximate repeats stretch occupies residues 47–101 (KTAEFRDSAGETIRDLTGQAQEKGQEFKERAGEKAEETKQRAGEKMDETKQRAGE).

The protein belongs to the LEA type 4 family.

May be involved in defense against water stress. The sequence is that of Late embryogenesis abundant protein 1 from Aphelenchoides avenae (Mycophagous nematode worm).